We begin with the raw amino-acid sequence, 125 residues long: Large ribosomal subunit protein bL12 (125 aa).

This sequence belongs to the bacterial ribosomal protein bL12 family. In terms of assembly, homodimer. Part of the ribosomal stalk of the 50S ribosomal subunit. Forms a multimeric L10(L12)X complex, where L10 forms an elongated spine to which 2 to 4 L12 dimers bind in a sequential fashion. Binds GTP-bound translation factors.

Its function is as follows. Forms part of the ribosomal stalk which helps the ribosome interact with GTP-bound translation factors. Is thus essential for accurate translation. This chain is Large ribosomal subunit protein bL12, found in Chlorobium phaeobacteroides (strain DSM 266 / SMG 266 / 2430).